Consider the following 413-residue polypeptide: Putative competence-damage inducible protein (413 aa).

It belongs to the CinA family.

This chain is Putative competence-damage inducible protein, found in Halothermothrix orenii (strain H 168 / OCM 544 / DSM 9562).